Consider the following 1241-residue polypeptide: DNA-directed RNA polymerase subunit beta (1241 aa).

This sequence belongs to the RNA polymerase beta chain family. In terms of assembly, the RNAP catalytic core consists of 2 alpha, 1 beta, 1 beta' and 1 omega subunit. When a sigma factor is associated with the core the holoenzyme is formed, which can initiate transcription.

The catalysed reaction is RNA(n) + a ribonucleoside 5'-triphosphate = RNA(n+1) + diphosphate. In terms of biological role, DNA-dependent RNA polymerase catalyzes the transcription of DNA into RNA using the four ribonucleoside triphosphates as substrates. This chain is DNA-directed RNA polymerase subunit beta, found in Clostridium botulinum (strain Alaska E43 / Type E3).